A 392-amino-acid chain; its full sequence is Succinate--CoA ligase [ADP-forming] subunit beta (392 aa).

One can recognise an ATP-grasp domain in the interval 9-236 (RDLFERHGLP…QAAVDPLEQA (228 aa)). ATP-binding positions include lysine 45, 52-54 (GRG), alanine 94, and glutamate 99. Asparagine 191 and aspartate 205 together coordinate Mg(2+). Substrate is bound by residues asparagine 256 and 318 to 320 (GIT).

This sequence belongs to the succinate/malate CoA ligase beta subunit family. Heterotetramer of two alpha and two beta subunits. Requires Mg(2+) as cofactor.

The enzyme catalyses succinate + ATP + CoA = succinyl-CoA + ADP + phosphate. It carries out the reaction GTP + succinate + CoA = succinyl-CoA + GDP + phosphate. It functions in the pathway carbohydrate metabolism; tricarboxylic acid cycle; succinate from succinyl-CoA (ligase route): step 1/1. Succinyl-CoA synthetase functions in the citric acid cycle (TCA), coupling the hydrolysis of succinyl-CoA to the synthesis of either ATP or GTP and thus represents the only step of substrate-level phosphorylation in the TCA. The beta subunit provides nucleotide specificity of the enzyme and binds the substrate succinate, while the binding sites for coenzyme A and phosphate are found in the alpha subunit. The polypeptide is Succinate--CoA ligase [ADP-forming] subunit beta (Salinispora tropica (strain ATCC BAA-916 / DSM 44818 / JCM 13857 / NBRC 105044 / CNB-440)).